The chain runs to 207 residues: Small ribosomal subunit protein uS4 (207 aa).

Residues 98–164 form the S4 RNA-binding domain; that stretch reads RRLDNVVYRM…AKFKNLVEVN (67 aa).

The protein belongs to the universal ribosomal protein uS4 family. In terms of assembly, part of the 30S ribosomal subunit. Contacts protein S5. The interaction surface between S4 and S5 is involved in control of translational fidelity.

In terms of biological role, one of the primary rRNA binding proteins, it binds directly to 16S rRNA where it nucleates assembly of the body of the 30S subunit. With S5 and S12 plays an important role in translational accuracy. This chain is Small ribosomal subunit protein uS4, found in Clostridioides difficile (strain 630) (Peptoclostridium difficile).